We begin with the raw amino-acid sequence, 350 residues long: S-adenosylmethionine:tRNA ribosyltransferase-isomerase (350 aa).

This sequence belongs to the QueA family. As to quaternary structure, monomer.

The protein localises to the cytoplasm. It catalyses the reaction 7-aminomethyl-7-carbaguanosine(34) in tRNA + S-adenosyl-L-methionine = epoxyqueuosine(34) in tRNA + adenine + L-methionine + 2 H(+). Its pathway is tRNA modification; tRNA-queuosine biosynthesis. In terms of biological role, transfers and isomerizes the ribose moiety from AdoMet to the 7-aminomethyl group of 7-deazaguanine (preQ1-tRNA) to give epoxyqueuosine (oQ-tRNA). The polypeptide is S-adenosylmethionine:tRNA ribosyltransferase-isomerase (Bacillus mycoides (strain KBAB4) (Bacillus weihenstephanensis)).